A 100-amino-acid polypeptide reads, in one-letter code: Aspartyl/glutamyl-tRNA(Asn/Gln) amidotransferase subunit C (100 aa).

Belongs to the GatC family. As to quaternary structure, heterotrimer of A, B and C subunits.

It carries out the reaction L-glutamyl-tRNA(Gln) + L-glutamine + ATP + H2O = L-glutaminyl-tRNA(Gln) + L-glutamate + ADP + phosphate + H(+). The catalysed reaction is L-aspartyl-tRNA(Asn) + L-glutamine + ATP + H2O = L-asparaginyl-tRNA(Asn) + L-glutamate + ADP + phosphate + 2 H(+). Functionally, allows the formation of correctly charged Asn-tRNA(Asn) or Gln-tRNA(Gln) through the transamidation of misacylated Asp-tRNA(Asn) or Glu-tRNA(Gln) in organisms which lack either or both of asparaginyl-tRNA or glutaminyl-tRNA synthetases. The reaction takes place in the presence of glutamine and ATP through an activated phospho-Asp-tRNA(Asn) or phospho-Glu-tRNA(Gln). This Streptococcus mutans serotype c (strain ATCC 700610 / UA159) protein is Aspartyl/glutamyl-tRNA(Asn/Gln) amidotransferase subunit C.